A 103-amino-acid chain; its full sequence is Small ribosomal subunit protein uS10 (103 aa).

It belongs to the universal ribosomal protein uS10 family. As to quaternary structure, part of the 30S ribosomal subunit.

In terms of biological role, involved in the binding of tRNA to the ribosomes. The polypeptide is Small ribosomal subunit protein uS10 (Shewanella denitrificans (strain OS217 / ATCC BAA-1090 / DSM 15013)).